The primary structure comprises 314 residues: Dihydroorotate dehydrogenase (fumarate) (314 aa).

Substrate contacts are provided by residues K46, 70–74 (NSMGL), and N130. Residue 46 to 47 (KS) coordinates FMN. N130 serves as a coordination point for FMN. Residues S132 and C133 each act as nucleophile in the active site. 2 residues coordinate FMN: K167 and I195. Position 196-197 (196-197 (NS)) interacts with substrate. FMN is bound by residues G224, 252–253 (GG), and 274–275 (GT).

The protein belongs to the dihydroorotate dehydrogenase family. Type 1 subfamily. In terms of assembly, homodimer. FMN is required as a cofactor.

Its subcellular location is the cytoplasm. The catalysed reaction is (S)-dihydroorotate + fumarate = orotate + succinate. The protein operates within pyrimidine metabolism; UMP biosynthesis via de novo pathway. In terms of biological role, catalyzes the conversion of dihydroorotate to orotate with fumarate as the electron acceptor. The sequence is that of Dihydroorotate dehydrogenase (fumarate) (URA1) from Saccharomyces paradoxus (Yeast).